The sequence spans 639 residues: UvrABC system protein C (639 aa).

The GIY-YIG domain occupies 20–97; sequence ERSGVYRMFD…IKKFQPKFNI (78 aa). Residues 207-242 form the UVR domain; that stretch reads KELQENLSRKMEELSSQMRFEEAAEIRDRIKALSYV.

Belongs to the UvrC family. In terms of assembly, interacts with UvrB in an incision complex.

It localises to the cytoplasm. Its function is as follows. The UvrABC repair system catalyzes the recognition and processing of DNA lesions. UvrC both incises the 5' and 3' sides of the lesion. The N-terminal half is responsible for the 3' incision and the C-terminal half is responsible for the 5' incision. In Rickettsia rickettsii (strain Iowa), this protein is UvrABC system protein C.